The sequence spans 744 residues: NAD(P)H-quinone oxidoreductase subunit 5, chloroplastic (744 aa).

The next 16 helical transmembrane spans lie at 9–29 (WIIP…LLLF), 40–60 (WAFQ…NLSI), 89–109 (IDPL…MVLI), 125–145 (FAYM…SNLI), 147–167 (IYIF…FWFT), 185–205 (GDFG…SFEF), 219–239 (NEVN…GAIA), 258–278 (TPIS…FLVA), 290–312 (IMNF…ALAQ), 327–347 (LGYM…FHLI), 354–374 (ALLF…VGYC), 396–416 (TSFL…CFWS), 425–445 (WLYS…TAFY), 549–569 (LFPI…GIPF), 608–628 (VFSV…YKPV), and 724–744 (YLFF…FLNF).

Belongs to the complex I subunit 5 family. In terms of assembly, NDH is composed of at least 16 different subunits, 5 of which are encoded in the nucleus.

The protein localises to the plastid. Its subcellular location is the chloroplast thylakoid membrane. The enzyme catalyses a plastoquinone + NADH + (n+1) H(+)(in) = a plastoquinol + NAD(+) + n H(+)(out). It catalyses the reaction a plastoquinone + NADPH + (n+1) H(+)(in) = a plastoquinol + NADP(+) + n H(+)(out). Its function is as follows. NDH shuttles electrons from NAD(P)H:plastoquinone, via FMN and iron-sulfur (Fe-S) centers, to quinones in the photosynthetic chain and possibly in a chloroplast respiratory chain. The immediate electron acceptor for the enzyme in this species is believed to be plastoquinone. Couples the redox reaction to proton translocation, and thus conserves the redox energy in a proton gradient. The protein is NAD(P)H-quinone oxidoreductase subunit 5, chloroplastic (ndhF) of Adenocaulon himalaicum (Trailplant).